Here is a 306-residue protein sequence, read N- to C-terminus: Aspartate carbamoyltransferase catalytic subunit (306 aa).

Positions 55 and 56 each coordinate carbamoyl phosphate. Lys-84 lines the L-aspartate pocket. Carbamoyl phosphate is bound by residues Arg-105, His-133, and Gln-136. Residues Arg-166 and Arg-227 each contribute to the L-aspartate site. Carbamoyl phosphate contacts are provided by Leu-265 and Pro-266.

This sequence belongs to the aspartate/ornithine carbamoyltransferase superfamily. ATCase family. As to quaternary structure, heterododecamer (2C3:3R2) of six catalytic PyrB chains organized as two trimers (C3), and six regulatory PyrI chains organized as three dimers (R2).

It catalyses the reaction carbamoyl phosphate + L-aspartate = N-carbamoyl-L-aspartate + phosphate + H(+). Its pathway is pyrimidine metabolism; UMP biosynthesis via de novo pathway; (S)-dihydroorotate from bicarbonate: step 2/3. Catalyzes the condensation of carbamoyl phosphate and aspartate to form carbamoyl aspartate and inorganic phosphate, the committed step in the de novo pyrimidine nucleotide biosynthesis pathway. The protein is Aspartate carbamoyltransferase catalytic subunit of Neisseria gonorrhoeae (strain ATCC 700825 / FA 1090).